We begin with the raw amino-acid sequence, 292 residues long: tRNA-cytidine(32) 2-sulfurtransferase (292 aa).

The PP-loop motif signature appears at 53 to 58 (SGGKDS). Residues Cys128, Cys131, and Cys219 each coordinate [4Fe-4S] cluster.

This sequence belongs to the TtcA family. As to quaternary structure, homodimer. Mg(2+) is required as a cofactor. The cofactor is [4Fe-4S] cluster.

It is found in the cytoplasm. The catalysed reaction is cytidine(32) in tRNA + S-sulfanyl-L-cysteinyl-[cysteine desulfurase] + AH2 + ATP = 2-thiocytidine(32) in tRNA + L-cysteinyl-[cysteine desulfurase] + A + AMP + diphosphate + H(+). It participates in tRNA modification. In terms of biological role, catalyzes the ATP-dependent 2-thiolation of cytidine in position 32 of tRNA, to form 2-thiocytidine (s(2)C32). The sulfur atoms are provided by the cysteine/cysteine desulfurase (IscS) system. The protein is tRNA-cytidine(32) 2-sulfurtransferase of Cereibacter sphaeroides (strain ATCC 17023 / DSM 158 / JCM 6121 / CCUG 31486 / LMG 2827 / NBRC 12203 / NCIMB 8253 / ATH 2.4.1.) (Rhodobacter sphaeroides).